A 442-amino-acid polypeptide reads, in one-letter code: Metacaspase-5 (442 aa).

A signal peptide spans 1 to 18 (MDLLLGVLSSGILQNALP). Residues 19–62 (FVAGVGRVKRPKRVKLEEAFREAHLCRPVIPYRAPTPYTGGRVK) are important for catalytic activity. N-linked (GlcNAc...) asparagine glycans are attached at residues asparagine 69 and asparagine 112. Histidine 146 is a catalytic residue. Residues aspartate 161, aspartate 177, and aspartate 178 each contribute to the Ca(2+) site. Residue cysteine 201 is part of the active site. Aspartate 208 lines the Ca(2+) pocket. N-linked (GlcNAc...) asparagine glycosylation is found at asparagine 234, asparagine 257, asparagine 282, and asparagine 331. Positions 336 to 442 (HYVPQQYLQP…QYLSGVGKPL (107 aa)) are negatively regulates catalytic activity. The segment covering 348-371 (PPQPYYPPPQPQQPYYPPPQPQQP) has biased composition (pro residues). The interval 348–442 (PPQPYYPPPQ…QYLSGVGKPL (95 aa)) is disordered. The span at 372–382 (YYPSSQLPTQY) shows a compositional bias: low complexity. Polar residues predominate over residues 422–434 (PSDQSTYYSSAQY).

This sequence belongs to the peptidase C14B family. In epimastigotes, the unprocessed enzyme appears to be the main form. Auto-processing is dispensable for catalytic activity towards small oligopeptide substrates.

The protein resides in the recycling endosome. With respect to regulation, activated by Ca(2+). Functionally, cysteine protease that cleaves specifically after arginine or lysine residues. May play a role in apoptosis. In Trypanosoma cruzi (strain CL Brener), this protein is Metacaspase-5.